The chain runs to 453 residues: Cobyrinate a,c-diamide synthase (453 aa).

Residues R250–D440 enclose the GATase cobBQ-type domain. C332 (nucleophile) is an active-site residue.

The protein belongs to the CobB/CbiA family. Mg(2+) serves as cofactor.

The enzyme catalyses cob(II)yrinate + 2 L-glutamine + 2 ATP + 2 H2O = cob(II)yrinate a,c diamide + 2 L-glutamate + 2 ADP + 2 phosphate + 2 H(+). It catalyses the reaction Ni-sirohydrochlorin + 2 L-glutamine + 2 ATP + 2 H2O = Ni-sirohydrochlorin a,c-diamide + 2 L-glutamate + 2 ADP + 2 phosphate + 2 H(+). It participates in cofactor biosynthesis; adenosylcobalamin biosynthesis; cob(II)yrinate a,c-diamide from sirohydrochlorin (anaerobic route): step 10/10. Its function is as follows. Catalyzes the ATP-dependent amidation of the two carboxylate groups at positions a and c of cobyrinate, using either L-glutamine or ammonia as the nitrogen source. Involved in the biosynthesis of the unique nickel-containing tetrapyrrole coenzyme F430, the prosthetic group of methyl-coenzyme M reductase (MCR), which plays a key role in methanogenesis and anaerobic methane oxidation. Catalyzes the ATP-dependent amidation of the two carboxylate groups at positions a and c of Ni-sirohydrochlorin, using L-glutamine or ammonia as the nitrogen source. The protein is Cobyrinate a,c-diamide synthase of Methanosphaera stadtmanae (strain ATCC 43021 / DSM 3091 / JCM 11832 / MCB-3).